Consider the following 396-residue polypeptide: Tryptophan synthase beta chain 1 (396 aa).

K86 carries the post-translational modification N6-(pyridoxal phosphate)lysine.

It belongs to the TrpB family. In terms of assembly, tetramer of two alpha and two beta chains. Requires pyridoxal 5'-phosphate as cofactor.

It carries out the reaction (1S,2R)-1-C-(indol-3-yl)glycerol 3-phosphate + L-serine = D-glyceraldehyde 3-phosphate + L-tryptophan + H2O. It participates in amino-acid biosynthesis; L-tryptophan biosynthesis; L-tryptophan from chorismate: step 5/5. Its function is as follows. The beta subunit is responsible for the synthesis of L-tryptophan from indole and L-serine. This chain is Tryptophan synthase beta chain 1 (trpB1), found in Vibrio parahaemolyticus serotype O3:K6 (strain RIMD 2210633).